The following is a 445-amino-acid chain: Gamma conglutin 2 (445 aa).

The N-terminal stretch at 1 to 33 is a signal peptide; that stretch reads MAQNMAPIFHFIAISLSCSFLFVLSSSQDSQSL. Residues 60–425 form the Peptidase A1 domain; sequence HWANIHKRTP…DFAKSRVEFN (366 aa). Cystine bridges form between Cys-88/Cys-178, Cys-102/Cys-115, Cys-107/Cys-133, Cys-118/Cys-128, and Cys-346/Cys-387. Asn-130 carries an N-linked (GlcNAc...) asparagine glycan.

Belongs to the peptidase A1 family. As to quaternary structure, two-subunit monomeric unit made of alpha and beta subunits coupled by disulfide bonds (at pH 4.5 and under non-reducing conditions). Can also form oligomers including dimer, tetramer and cyclic hexamer (trimer of dimers) (at pH &gt; 5.5). Component of globulins complexes which accumulate in seeds. Interacts with flavonoids (e.g. apigenin glucosides) present in globulins complexes. In terms of processing, glycosylated on alpha chain.

It localises to the secreted. The protein resides in the extracellular space. Its function is as follows. Sulfur-rich seed storage protein that remains undegraded at germination. This chain is Gamma conglutin 2, found in Lupinus angustifolius (Narrow-leaved blue lupine).